Consider the following 273-residue polypeptide: Large ribosomal subunit protein uL2 (273 aa).

Residues 228 to 273 (IDHPHGGGEGKTSGGRHPVTPWGFSTKGKKTRKNKRTSKFIVKKRK) form a disordered region. A compositionally biased stretch (basic residues) spans 254–273 (KGKKTRKNKRTSKFIVKKRK).

Belongs to the universal ribosomal protein uL2 family. In terms of assembly, part of the 50S ribosomal subunit. Forms a bridge to the 30S subunit in the 70S ribosome.

Functionally, one of the primary rRNA binding proteins. Required for association of the 30S and 50S subunits to form the 70S ribosome, for tRNA binding and peptide bond formation. It has been suggested to have peptidyltransferase activity; this is somewhat controversial. Makes several contacts with the 16S rRNA in the 70S ribosome. This Rickettsia typhi (strain ATCC VR-144 / Wilmington) protein is Large ribosomal subunit protein uL2.